A 572-amino-acid chain; its full sequence is Arginine--tRNA ligase (572 aa).

The 'HIGH' region motif lies at 122–132 (PNLAKEMHVGH).

The protein belongs to the class-I aminoacyl-tRNA synthetase family. As to quaternary structure, monomer.

Its subcellular location is the cytoplasm. The catalysed reaction is tRNA(Arg) + L-arginine + ATP = L-arginyl-tRNA(Arg) + AMP + diphosphate. The polypeptide is Arginine--tRNA ligase (Neisseria meningitidis serogroup C / serotype 2a (strain ATCC 700532 / DSM 15464 / FAM18)).